Reading from the N-terminus, the 1412-residue chain is Sister chromatid cohesion protein PDS5 homolog B (1412 aa).

Residues 383–419 form an HEAT repeat; sequence LLVNDHLLNFVRERTLDKRWRVRKEAMMGLAQIYKKY. Residues 1137–1412 are disordered; the sequence is PLSSAGKQSQ…RRRTSKRERR (276 aa). Low complexity-rich tracts occupy residues 1139-1149 and 1156-1167; these read SSAGKQSQSKS and SNASSSSNPSSP. 4 stretches are compositionally biased toward basic and acidic residues: residues 1172 to 1184, 1196 to 1212, 1223 to 1241, and 1263 to 1272; these read GRLD…HSEN, KKTD…LEKP, SEEK…DQKL, and QEEKRLKEDV. The span at 1322–1331 shows a compositional bias: acidic residues; it reads VEEEEEEEER. The span at 1350 to 1362 shows a compositional bias: polar residues; the sequence is RTQQSRAGRSKQA. The span at 1386-1397 shows a compositional bias: acidic residues; it reads VPQEEVMEEEEV. The segment covering 1402-1412 has biased composition (basic residues); that stretch reads VRRRTSKRERR.

Interacts with the cohesin complex.

The protein localises to the nucleus. Its function is as follows. Plays a role in androgen-induced proliferative arrest. Required for maintenance of sister chromatid cohesion during mitosis. This chain is Sister chromatid cohesion protein PDS5 homolog B (PDS5B), found in Gallus gallus (Chicken).